A 644-amino-acid chain; its full sequence is Macrolide export ATP-binding/permease protein MacB (644 aa).

An ABC transporter domain is found at 4–242 (IECKNINRYF…SNVGRIQEKA (239 aa)). ATP is bound at residue 40-47 (GQSGSGKS). 4 consecutive transmembrane segments (helical) span residues 270-290 (LLTM…VALG), 524-544 (IALI…LVSV), 574-594 (LICI…SLVF), and 607-627 (AASV…FGFM).

The protein belongs to the ABC transporter superfamily. Macrolide exporter (TC 3.A.1.122) family. As to quaternary structure, homodimer.

The protein resides in the cell inner membrane. Its function is as follows. Non-canonical ABC transporter that contains transmembrane domains (TMD), which form a pore in the inner membrane, and an ATP-binding domain (NBD), which is responsible for energy generation. Overexpression confers resistance against macrolides. The polypeptide is Macrolide export ATP-binding/permease protein MacB (Neisseria gonorrhoeae).